Here is a 156-residue protein sequence, read N- to C-terminus: 6,7-dimethyl-8-ribityllumazine synthase (156 aa).

Residues Phe-22, 57–59 (AYE), and 81–83 (TVI) contribute to the 5-amino-6-(D-ribitylamino)uracil site. 86–87 (GT) contacts (2S)-2-hydroxy-3-oxobutyl phosphate. His-89 functions as the Proton donor in the catalytic mechanism. 5-amino-6-(D-ribitylamino)uracil is bound at residue Phe-114. A (2S)-2-hydroxy-3-oxobutyl phosphate-binding site is contributed by Arg-128.

Belongs to the DMRL synthase family. Forms an icosahedral capsid composed of 60 subunits, arranged as a dodecamer of pentamers.

It carries out the reaction (2S)-2-hydroxy-3-oxobutyl phosphate + 5-amino-6-(D-ribitylamino)uracil = 6,7-dimethyl-8-(1-D-ribityl)lumazine + phosphate + 2 H2O + H(+). Its pathway is cofactor biosynthesis; riboflavin biosynthesis; riboflavin from 2-hydroxy-3-oxobutyl phosphate and 5-amino-6-(D-ribitylamino)uracil: step 1/2. Its function is as follows. Catalyzes the formation of 6,7-dimethyl-8-ribityllumazine by condensation of 5-amino-6-(D-ribitylamino)uracil with 3,4-dihydroxy-2-butanone 4-phosphate. This is the penultimate step in the biosynthesis of riboflavin. The polypeptide is 6,7-dimethyl-8-ribityllumazine synthase (Photorhabdus laumondii subsp. laumondii (strain DSM 15139 / CIP 105565 / TT01) (Photorhabdus luminescens subsp. laumondii)).